Consider the following 131-residue polypeptide: MMTLYSFSTEVRLRCAADYQGVFDGALFKVHQPHFLFLAKPSEQLQSRLGVIVAKKKVRRAHERNRIKRLARESFRLHQQQLGLLDIVVMPKIGIEAVSNADLHQQLEFAWQKLQRQAKKYQKVAVSPSLH.

Belongs to the RnpA family. As to quaternary structure, consists of a catalytic RNA component (M1 or rnpB) and a protein subunit.

The enzyme catalyses Endonucleolytic cleavage of RNA, removing 5'-extranucleotides from tRNA precursor.. Its function is as follows. RNaseP catalyzes the removal of the 5'-leader sequence from pre-tRNA to produce the mature 5'-terminus. It can also cleave other RNA substrates such as 4.5S RNA. The protein component plays an auxiliary but essential role in vivo by binding to the 5'-leader sequence and broadening the substrate specificity of the ribozyme. The polypeptide is Ribonuclease P protein component (Acinetobacter baylyi (strain ATCC 33305 / BD413 / ADP1)).